The chain runs to 488 residues: Aspartyl/glutamyl-tRNA(Asn/Gln) amidotransferase subunit B (488 aa).

This sequence belongs to the GatB/GatE family. GatB subfamily. In terms of assembly, heterotrimer of A, B and C subunits.

The enzyme catalyses L-glutamyl-tRNA(Gln) + L-glutamine + ATP + H2O = L-glutaminyl-tRNA(Gln) + L-glutamate + ADP + phosphate + H(+). It carries out the reaction L-aspartyl-tRNA(Asn) + L-glutamine + ATP + H2O = L-asparaginyl-tRNA(Asn) + L-glutamate + ADP + phosphate + 2 H(+). Its function is as follows. Allows the formation of correctly charged Asn-tRNA(Asn) or Gln-tRNA(Gln) through the transamidation of misacylated Asp-tRNA(Asn) or Glu-tRNA(Gln) in organisms which lack either or both of asparaginyl-tRNA or glutaminyl-tRNA synthetases. The reaction takes place in the presence of glutamine and ATP through an activated phospho-Asp-tRNA(Asn) or phospho-Glu-tRNA(Gln). The chain is Aspartyl/glutamyl-tRNA(Asn/Gln) amidotransferase subunit B from Ralstonia pickettii (strain 12J).